The sequence spans 249 residues: tRNA pseudouridine synthase A (249 aa).

Asp53 functions as the Nucleophile in the catalytic mechanism. Residue Tyr111 participates in substrate binding.

It belongs to the tRNA pseudouridine synthase TruA family. Homodimer.

The enzyme catalyses uridine(38/39/40) in tRNA = pseudouridine(38/39/40) in tRNA. Its function is as follows. Formation of pseudouridine at positions 38, 39 and 40 in the anticodon stem and loop of transfer RNAs. This chain is tRNA pseudouridine synthase A, found in Streptococcus mutans serotype c (strain ATCC 700610 / UA159).